Consider the following 100-residue polypeptide: MSFKKIAEMMRQAERETKKKTLAFEQQAFEYNYKNGAIKITILGDLTLKSINIDPVLIDASDKVILEEMIIEATNEAVSDVKTKYDNLVEKTMPKVPGLF.

This is an uncharacterized protein from Mycoplasma genitalium (strain ATCC 33530 / DSM 19775 / NCTC 10195 / G37) (Mycoplasmoides genitalium).